Here is a 382-residue protein sequence, read N- to C-terminus: GTPase Obg (382 aa).

In terms of domain architecture, Obg spans 2-161 (VKFADESKIR…REIIVELNII (160 aa)). Positions 162-328 (ADIGLVGFPN…VKKAFIRLAD (167 aa)) constitute an OBG-type G domain. GTP contacts are provided by residues 168–175 (GFPNAGKS), 193–197 (FTTKI), 215–218 (DIPG), 282–285 (TKLD), and 309–311 (SLY). Positions 175 and 195 each coordinate Mg(2+). A disordered region spans residues 360 to 382 (EEKNDDEHFGATVSLSRKRKPKK).

The protein belongs to the TRAFAC class OBG-HflX-like GTPase superfamily. OBG GTPase family. Monomer. Requires Mg(2+) as cofactor.

It is found in the cytoplasm. Functionally, an essential GTPase which binds GTP, GDP and possibly (p)ppGpp with moderate affinity, with high nucleotide exchange rates and a fairly low GTP hydrolysis rate. Plays a role in control of the cell cycle, stress response, ribosome biogenesis and in those bacteria that undergo differentiation, in morphogenesis control. The polypeptide is GTPase Obg (Treponema denticola (strain ATCC 35405 / DSM 14222 / CIP 103919 / JCM 8153 / KCTC 15104)).